Here is a 648-residue protein sequence, read N- to C-terminus: Biosynthetic arginine decarboxylase (648 aa).

The residue at position 109 (K109) is an N6-(pyridoxal phosphate)lysine. Position 291-301 (291-301 (IDVGGGLGIDF)) interacts with substrate.

It belongs to the Orn/Lys/Arg decarboxylase class-II family. SpeA subfamily. Mg(2+) is required as a cofactor. Pyridoxal 5'-phosphate serves as cofactor.

The catalysed reaction is L-arginine + H(+) = agmatine + CO2. It participates in amine and polyamine biosynthesis; agmatine biosynthesis; agmatine from L-arginine: step 1/1. Its function is as follows. Catalyzes the biosynthesis of agmatine from arginine. The polypeptide is Biosynthetic arginine decarboxylase (Prochlorococcus marinus (strain MIT 9215)).